Here is a 132-residue protein sequence, read N- to C-terminus: Pro-MCH 1 (132 aa).

A signal peptide spans methionine 1 to alanine 24. Cysteine 120 and cysteine 129 form a disulfide bridge.

This sequence belongs to the melanin-concentrating hormone family. Pituitary gland. Produced in neurons of lateral basal hypothalamus which project both to the brain and to the neural lobe of the pituitary gland from where MCH is released.

Its function is as follows. Plays a role in skin pigmentation by antagonizing the action of melanotropin alpha. Induces melanin concentration within the melanophores. May participate in the control of the hypothalamo-pituitary adrenal gland axis by inhibiting the release of ACTH. This chain is Pro-MCH 1 (mch1), found in Oncorhynchus keta (Chum salmon).